Here is a 185-residue protein sequence, read N- to C-terminus: Ribosome-recycling factor (185 aa).

This sequence belongs to the RRF family.

It localises to the cytoplasm. Functionally, responsible for the release of ribosomes from messenger RNA at the termination of protein biosynthesis. May increase the efficiency of translation by recycling ribosomes from one round of translation to another. The protein is Ribosome-recycling factor of Corynebacterium urealyticum (strain ATCC 43042 / DSM 7109).